The chain runs to 643 residues: UPF0313 protein CLD_0573 (643 aa).

A Radical SAM core domain is found at 295–566; the sequence is AIKEVKFSIT…RMQRALLQFS (272 aa). Residues cysteine 309, cysteine 313, and cysteine 316 each coordinate [4Fe-4S] cluster. A disordered region spans residues 598–643; sequence NKPYKKSHKKNNAKNNNNHYNKNNNKNKDISKKNKKNSLSKHKKRK. A compositionally biased stretch (basic residues) spans 600–609; that stretch reads PYKKSHKKNN. The span at 610–621 shows a compositional bias: low complexity; the sequence is AKNNNNHYNKNN. Basic residues predominate over residues 630 to 643; sequence KNKKNSLSKHKKRK.

It belongs to the UPF0313 family. [4Fe-4S] cluster serves as cofactor.

This is UPF0313 protein CLD_0573 from Clostridium botulinum (strain Okra / Type B1).